Here is a 475-residue protein sequence, read N- to C-terminus: Equilibrative nucleoside transporter 3 (475 aa).

At 1 to 51 (MAFASEDNVYHSSNAVYRAPSNHQEADQEALLGKLLDYPAPGLQRPEDRFN) the chain is on the cytoplasmic side. S21 is modified (phosphoserine). Positions 31 to 32 (LL) match the Dileucine internalization motif motif. The helical transmembrane segment at 52–72 (GAYIIFFCLGIGGLLPWNFFV) threads the bilayer. At 73–105 (TAKEYWAYKLRNCSSPASGEDPEDMDILNYFES) the chain is on the extracellular side. N-linked (GlcNAc...) asparagine glycosylation occurs at N84. Residues 106 to 126 (YLAVASTVPSLLFLVANFLLV) traverse the membrane as a helical segment. Residues 127–134 (NRVQVHVR) are Cytoplasmic-facing. Residues 135–155 (VLASLSVSLAIFVVMIVLVKV) form a helical membrane-spanning segment. At 156–162 (DTSSWTR) the chain is on the extracellular side. A helical membrane pass occupies residues 163–183 (GFFSLTIACMAIISSSSTIFN). The Cytoplasmic portion of the chain corresponds to 184–199 (SSVYGLTGSFPMRNAQ). A helical transmembrane segment spans residues 200 to 220 (ALISGGAMGGTVSAVALLVDL). Topologically, residues 221 to 230 (AASSDVRDST) are extracellular. The helical transmembrane segment at 231-251 (LAFFLMAAVFLGLCMGLYLLL) threads the bilayer. Over 252–305 (SQLEYARYYMRPVAPVRVFSGEDNPSQDAPSASSVAPASRVMHTPPLGPILKKT) the chain is Cytoplasmic. The helical transmembrane segment at 306–326 (ASLGFCAVSLYFVTAFIIPAI) threads the bilayer. Residues 327 to 340 (STNIQSMHKGTGSP) lie on the Extracellular side of the membrane. The chain crosses the membrane as a helical span at residues 341-361 (WTSKFFVPLTVFLLFNFADLC). Residues 362–377 (GRQVTAWIQVPGPRSK) lie on the Cytoplasmic side of the membrane. Residues 378–398 (LLPGLVVSRFCLVPLFLLCNY) form a helical membrane-spanning segment. Residues 399-415 (QPRSHLTKVLFQSDIYP) lie on the Extracellular side of the membrane. A helical membrane pass occupies residues 416 to 436 (VLFTCLLGLSNGYLSTLVLIY). The Cytoplasmic portion of the chain corresponds to 437–450 (GPKIVPRELAEATS). Residues 451–471 (VVMLFYMSVGLMLGSACAALL) form a helical membrane-spanning segment. The Extracellular segment spans residues 472–475 (EHFI).

Belongs to the SLC29A/ENT transporter (TC 2.A.57) family. As to expression, expressed in macrophages.

The protein localises to the lysosome membrane. The protein resides in the late endosome membrane. It localises to the mitochondrion membrane. It is found in the cell membrane. The catalysed reaction is adenosine(in) = adenosine(out). The enzyme catalyses guanosine(in) = guanosine(out). It carries out the reaction inosine(in) = inosine(out). It catalyses the reaction uridine(out) = uridine(in). The catalysed reaction is cytidine(in) = cytidine(out). The enzyme catalyses thymidine(in) = thymidine(out). It carries out the reaction 2'-deoxyadenosine(in) = 2'-deoxyadenosine(out). It catalyses the reaction 2'-deoxycytidine(in) = 2'-deoxycytidine(out). The catalysed reaction is guanine(out) = guanine(in). The enzyme catalyses uracil(in) = uracil(out). It carries out the reaction (R)-noradrenaline(out) = (R)-noradrenaline(in). It catalyses the reaction dopamine(out) = dopamine(in). The catalysed reaction is serotonin(out) = serotonin(in). The enzyme catalyses tyramine(in) = tyramine(out). It carries out the reaction ATP(in) = ATP(out). Uniporter that mediates the facilitative transport of nucleoside across lysosomal and mitochondrial membranes. Functions as a non-electrogenic Na(+)-independent transporter. Substrate transport is pH-dependent and enhanced under acidic condition, probably reflecting the location of the transporter in acidic intracellular compartments. Proton is not a cotransporting ion but most likely change the ionization state of the transporter which dictates transport-permissible/impermissible conformation for nucleoside translocation. May direct the nucleoside transport from lysosomes to cytosol or cytosol to mitochondria to facilitate the fundamental function of salvage synthesis of nucleic acids. Involved in the transport of nucleosides (adenosine, guanosine, uridine, thymidine, cytidine and inosine) and deoxynucleosides (deoxyadenosine, deoxycytidine). Also mediates transport of purine nucleobases (adenine, guanine), and pyrimidine nucleobases (uracil). Also able to transport monoamine neurotransmitters dopamine, serotonin, noradrenaline and tyramine. Capable of transporting ATP. Mediates nucleoside export from lysosomes in macrophages, which regulates macrophage functions and numbers. This is Equilibrative nucleoside transporter 3 from Mus musculus (Mouse).